A 337-amino-acid chain; its full sequence is Lipoyl synthase (337 aa).

[4Fe-4S] cluster is bound by residues Cys81, Cys86, Cys92, Cys107, Cys111, Cys114, and Ser323. The 220-residue stretch at 93–312 (FSHGTATFMI…EDYGNALGFS (220 aa)) folds into the Radical SAM core domain.

This sequence belongs to the radical SAM superfamily. Lipoyl synthase family. [4Fe-4S] cluster serves as cofactor.

The protein resides in the cytoplasm. The catalysed reaction is [[Fe-S] cluster scaffold protein carrying a second [4Fe-4S](2+) cluster] + N(6)-octanoyl-L-lysyl-[protein] + 2 oxidized [2Fe-2S]-[ferredoxin] + 2 S-adenosyl-L-methionine + 4 H(+) = [[Fe-S] cluster scaffold protein] + N(6)-[(R)-dihydrolipoyl]-L-lysyl-[protein] + 4 Fe(3+) + 2 hydrogen sulfide + 2 5'-deoxyadenosine + 2 L-methionine + 2 reduced [2Fe-2S]-[ferredoxin]. The protein operates within protein modification; protein lipoylation via endogenous pathway; protein N(6)-(lipoyl)lysine from octanoyl-[acyl-carrier-protein]: step 2/2. In terms of biological role, catalyzes the radical-mediated insertion of two sulfur atoms into the C-6 and C-8 positions of the octanoyl moiety bound to the lipoyl domains of lipoate-dependent enzymes, thereby converting the octanoylated domains into lipoylated derivatives. This chain is Lipoyl synthase, found in Xanthomonas campestris pv. campestris (strain B100).